The sequence spans 530 residues: Estrogen receptor beta (530 aa).

Residues 1-148 form a modulating region; that stretch reads MDIKNSPSSL…GPSSKRDAHF (148 aa). A Phosphoserine; alternate modification is found at serine 61. The O-linked (GlcNAc) serine; alternate glycan is linked to serine 61. Residues serine 87 and serine 105 each carry the phosphoserine; by MAPK modification. 2 NR C4-type zinc fingers span residues 149–169 and 185–209; these read CAVC…CEGC and CPAT…LRKC. Residues 149 to 214 constitute a DNA-binding region (nuclear receptor); that stretch reads CAVCSDYASG…RLRKCYEVGM (66 aa). The NR LBD domain occupies 264 to 498; sequence SPEQLVLTLL…DLLLEMMNAH (235 aa). Residues 507–530 are disordered; the sequence is ITGSECSPAEDSKSTEGSQNPQSP. Over residues 521-530 the composition is skewed to polar residues; the sequence is TEGSQNPQSP.

It belongs to the nuclear hormone receptor family. NR3 subfamily. Binds DNA as a homodimer. Can form a heterodimer with ESR1. Interacts with NCOA1, NCOA3, NCOA5 and NCOA6 coactivators, leading to a strong increase of transcription of target genes. Interacts with UBE1C and AKAP13. Interacts with DNTTIP2. Interacts with CCDC62 in the presence of estradiol/E2; this interaction seems to enhance the transcription of target genes. Interacts with DNAAF4. Interacts with PRMT2. Interacts with CCAR2 (via N-terminus) in a ligand-independent manner. Interacts with RBM39, in the presence of estradiol (E2). Interacts with STUB1/CHIP. Phosphorylation at Ser-87 and Ser-105 recruits NCOA1.

The protein localises to the nucleus. Functionally, nuclear hormone receptor. Binds estrogens with an affinity similar to that of ESR1/ER-alpha, and activates expression of reporter genes containing estrogen response elements (ERE) in an estrogen-dependent manner. The polypeptide is Estrogen receptor beta (ESR2) (Callithrix jacchus (White-tufted-ear marmoset)).